Consider the following 510-residue polypeptide: ATP synthase subunit alpha (510 aa).

An ATP-binding site is contributed by 169–176; sequence GDRQTGKT.

This sequence belongs to the ATPase alpha/beta chains family. In terms of assembly, F-type ATPases have 2 components, CF(1) - the catalytic core - and CF(0) - the membrane proton channel. CF(1) has five subunits: alpha(3), beta(3), gamma(1), delta(1), epsilon(1). CF(0) has three main subunits: a(1), b(2) and c(9-12). The alpha and beta chains form an alternating ring which encloses part of the gamma chain. CF(1) is attached to CF(0) by a central stalk formed by the gamma and epsilon chains, while a peripheral stalk is formed by the delta and b chains.

The protein localises to the cell inner membrane. It catalyses the reaction ATP + H2O + 4 H(+)(in) = ADP + phosphate + 5 H(+)(out). In terms of biological role, produces ATP from ADP in the presence of a proton gradient across the membrane. The alpha chain is a regulatory subunit. The sequence is that of ATP synthase subunit alpha from Anaeromyxobacter sp. (strain K).